A 118-amino-acid polypeptide reads, in one-letter code: uncharacterized protein (118 aa).

It belongs to the HesB/IscA family. Ycf83 subfamily.

This is an uncharacterized protein from Synechocystis sp. (strain ATCC 27184 / PCC 6803 / Kazusa).